The sequence spans 447 residues: Na(+)-translocating NADH-quinone reductase subunit A (447 aa).

It belongs to the NqrA family. As to quaternary structure, composed of six subunits; NqrA, NqrB, NqrC, NqrD, NqrE and NqrF.

It catalyses the reaction a ubiquinone + n Na(+)(in) + NADH + H(+) = a ubiquinol + n Na(+)(out) + NAD(+). Functionally, NQR complex catalyzes the reduction of ubiquinone-1 to ubiquinol by two successive reactions, coupled with the transport of Na(+) ions from the cytoplasm to the periplasm. NqrA to NqrE are probably involved in the second step, the conversion of ubisemiquinone to ubiquinol. In Haemophilus influenzae (strain 86-028NP), this protein is Na(+)-translocating NADH-quinone reductase subunit A.